Here is a 361-residue protein sequence, read N- to C-terminus: Probable purine permease 13 (361 aa).

Transmembrane regions (helical) follow at residues 35-55 (WILV…AVLL), 68-88 (WIST…LCFL), 103-123 (LVWI…LYSF), 129-151 (SAST…SYYI), 156-176 (ITCL…LVSL), 192-212 (LIGC…LSLM), 238-258 (VASC…LLSV), 268-288 (VIYV…SVGA), 289-309 (VALI…LSLI), and 323-343 (LTEV…FYIY).

It belongs to the purine permeases (TC 2.A.7.14) family.

The protein resides in the membrane. In Arabidopsis thaliana (Mouse-ear cress), this protein is Probable purine permease 13 (PUP13).